We begin with the raw amino-acid sequence, 210 residues long: Peroxynitrite isomerase (210 aa).

A GXWXGXG motif is present at residues 21–27 (GQWEGQG). His-190 lines the heme b pocket.

It belongs to the nitrobindin family. As to quaternary structure, homodimer. Heme b serves as cofactor.

The catalysed reaction is peroxynitrite = nitrate. It participates in nitrogen metabolism. Functionally, heme-binding protein able to scavenge peroxynitrite and to protect free L-tyrosine against peroxynitrite-mediated nitration, by acting as a peroxynitrite isomerase that converts peroxynitrite to nitrate. Therefore, this protein likely plays a role in peroxynitrite sensing and in the detoxification of reactive nitrogen and oxygen species (RNS and ROS, respectively). Is able to bind nitric oxide (NO) in vitro, but may act as a sensor of peroxynitrite levels in vivo. This Renibacterium salmoninarum (strain ATCC 33209 / DSM 20767 / JCM 11484 / NBRC 15589 / NCIMB 2235) protein is Peroxynitrite isomerase.